The chain runs to 609 residues: Glutamine--fructose-6-phosphate aminotransferase [isomerizing] (609 aa).

The active-site Nucleophile; for GATase activity is Cys2. The Glutamine amidotransferase type-2 domain occupies Cys2–Arg218. SIS domains follow at residues Ala286–Met426 and Leu458–Pro599. Lys604 (for Fru-6P isomerization activity) is an active-site residue.

As to quaternary structure, homodimer.

The protein localises to the cytoplasm. It catalyses the reaction D-fructose 6-phosphate + L-glutamine = D-glucosamine 6-phosphate + L-glutamate. Functionally, catalyzes the first step in hexosamine metabolism, converting fructose-6P into glucosamine-6P using glutamine as a nitrogen source. The polypeptide is Glutamine--fructose-6-phosphate aminotransferase [isomerizing] (Shewanella oneidensis (strain ATCC 700550 / JCM 31522 / CIP 106686 / LMG 19005 / NCIMB 14063 / MR-1)).